The chain runs to 143 residues: Sporulation-specific cell division protein SsgB (143 aa).

Belongs to the SsgA family. In terms of assembly, interacts with SsgA. Interacts with FtsZ (via N-terminus).

It is found in the cell septum. In terms of biological role, involved in sporulation-specific cell division. Required for early stages of sporulation. Important in the process of growth cessation prior to sporulation-specific cell division. Recruits cell division protein FtsZ to the future septum sites and tethers the contractile ring structure (Z ring) to the cytoplasmic membrane during sporulation. Stimulates polymerization and filament length of FtsZ in vitro. The polypeptide is Sporulation-specific cell division protein SsgB (Frankia casuarinae (strain DSM 45818 / CECT 9043 / HFP020203 / CcI3)).